The following is a 244-amino-acid chain: Reticulon-like protein B7 (244 aa).

The region spanning 70 to 244 is the Reticulon domain; that stretch reads PADVLLWRDK…EAKFLSKIPH (175 aa). Helical transmembrane passes span 80 to 100, 103 to 123, and 172 to 192; these read KVTL…GFGG, LLTS…LWSN, and FVMA…FSFL.

It localises to the endoplasmic reticulum membrane. In Arabidopsis thaliana (Mouse-ear cress), this protein is Reticulon-like protein B7 (RTNLB7).